The chain runs to 476 residues: Cytochrome c oxidase subunit 1 (476 aa).

Residues 19–39 form a helical membrane-spanning segment; it reads LYYLWFSFLFGSYGFLLSVIL. Glu-42 lines the Ca(2+) pocket. 8 consecutive transmembrane segments (helical) span residues 61–81, 105–125, 151–171, 194–214, 240–260, 278–298, 310–330, and 345–365; these read MIFTIHGIIMIFFNIMPGLFG, ISLLLQPIAFVLVILSTAAEF, VIIFGLLVSGVASIMSSLNFI, LIITSGMLLLTLPVLTGGVLM, LFWFFGHPEVYILILPAFGVI, MILAMGCIAVLGSLVWVHHMY, FTSTTILISIPTGTKVFNWIC, and LLSLLFICTFTFGGTTGVILG. Fe(II)-heme a is bound at residue His-66. His-246 serves as a coordination point for Cu cation. The 1'-histidyl-3'-tyrosine (His-Tyr) cross-link spans 246–250; the sequence is HPEVY. Tyr-250 contacts O2. 2 residues coordinate Cu cation: His-295 and His-296. Residues His-374 and Asp-375 each contribute to the Mg(2+) site. The next 2 helical transmembrane spans lie at 379-399 and 415-435; these read VIAHFHFVLSIGAIIGLFTTV and SIVILWSMLFFVGVILTFLPM. Residue His-382 coordinates heme a3. Fe(II)-heme a is bound at residue His-384. Pro-448 provides a ligand contact to Ca(2+). The chain crosses the membrane as a helical span at residues 455-475; sequence NGWNMICSIGSTMTLFGLLIF.

Belongs to the heme-copper respiratory oxidase family. In terms of assembly, component of the cytochrome c oxidase (complex IV, CIV), a multisubunit enzyme composed of a catalytic core of 3 subunits and several supernumerary subunits. The complex exists as a monomer or a dimer and forms supercomplexes (SCs) in the inner mitochondrial membrane with ubiquinol-cytochrome c oxidoreductase (cytochrome b-c1 complex, complex III, CIII). It depends on heme as a cofactor. Requires Cu cation as cofactor.

The protein localises to the mitochondrion inner membrane. The enzyme catalyses 4 Fe(II)-[cytochrome c] + O2 + 8 H(+)(in) = 4 Fe(III)-[cytochrome c] + 2 H2O + 4 H(+)(out). Its pathway is energy metabolism; oxidative phosphorylation. Functionally, component of the cytochrome c oxidase, the last enzyme in the mitochondrial electron transport chain which drives oxidative phosphorylation. The respiratory chain contains 3 multisubunit complexes succinate dehydrogenase (complex II, CII), ubiquinol-cytochrome c oxidoreductase (cytochrome b-c1 complex, complex III, CIII) and cytochrome c oxidase (complex IV, CIV), that cooperate to transfer electrons derived from NADH and succinate to molecular oxygen, creating an electrochemical gradient over the inner membrane that drives transmembrane transport and the ATP synthase. Cytochrome c oxidase is the component of the respiratory chain that catalyzes the reduction of oxygen to water. Electrons originating from reduced cytochrome c in the intermembrane space (IMS) are transferred via the dinuclear copper A center (CU(A)) of subunit 2 and heme A of subunit 1 to the active site in subunit 1, a binuclear center (BNC) formed by heme A3 and copper B (CU(B)). The BNC reduces molecular oxygen to 2 water molecules using 4 electrons from cytochrome c in the IMS and 4 protons from the mitochondrial matrix. This is Cytochrome c oxidase subunit 1 (MT-CO1) from Plasmodium falciparum.